The following is a 422-amino-acid chain: Elongation factor 1-alpha (422 aa).

Residues K5–S221 form the tr-type G domain. The tract at residues G14–S21 is G1. G14–S21 lines the GTP pocket. S21 contacts Mg(2+). The G2 stretch occupies residues G70–D74. The G3 stretch occupies residues D91–G94. GTP-binding positions include D91–H95 and N146–D149. The interval N146–D149 is G4. Positions S185–F187 are G5.

Belongs to the TRAFAC class translation factor GTPase superfamily. Classic translation factor GTPase family. EF-Tu/EF-1A subfamily.

Its subcellular location is the cytoplasm. The catalysed reaction is GTP + H2O = GDP + phosphate + H(+). Functionally, GTP hydrolase that promotes the GTP-dependent binding of aminoacyl-tRNA to the A-site of ribosomes during protein biosynthesis. The sequence is that of Elongation factor 1-alpha from Methanosarcina mazei (strain ATCC BAA-159 / DSM 3647 / Goe1 / Go1 / JCM 11833 / OCM 88) (Methanosarcina frisia).